The chain runs to 473 residues: MATQAKRPRVAGPVDGGDLDPVACFLSWCRRVGLELSPKVSERAGGRRTRGGARAALTSPPAQVAVSRQGTVAGYGMVARESVQAGELLFVVPRAALLSQHTCSIGGLLERERVALQSQSGWVPLLLALLHELQAPASRWRPYFALWPELGRLEHPMFWPEEERRCLLQGTGVPEAVEKDLANIRSEYQSIVLPFMEAHPDLFSLRVRSLELYHQLVALVMAYSFQEPLEEEEDEKEPNSPVMVPAADILNHLANHNANLEYSANCLRMVATQPIPKGHEIFNTYGQMANWQLIHMYGFVEPYPDNTDDTADIQMVTVREAALQGTKTEAERHLVYERWDFLCKLEMVGEEGAFVIGREEVLTEEELTTTLKVLCMPAEEFRELKDQDGGGDDKREEGSLTITNIPKLKASWRQLLQNSVLLTLQTYATDLKTDQGLLSNKEVYAKLSWREQQALQVRYGQKMILHQLLELTS.

Residue K39 is modified to N6-methylated lysine; by autocatalysis. The SET domain occupies 60–286 (PPAQVAVSRQ…KGHEIFNTYG (227 aa)). 73–75 (AGY) serves as a coordination point for S-adenosyl-L-methionine. W122 serves as a coordination point for substrate. K179 bears the N6-methylated lysine; by autocatalysis mark. Position 223 (Y223) interacts with S-adenosyl-L-methionine. Residues S224 and Q226 each contribute to the substrate site. Residue 251–252 (NH) coordinates S-adenosyl-L-methionine. Residues Y262 and Y297 each contribute to the substrate site. Y297 serves as a coordination point for S-adenosyl-L-methionine. N6-methylated lysine; by autocatalysis is present on K372.

This sequence belongs to the class V-like SAM-binding methyltransferase superfamily. Histone-lysine methyltransferase family. SETD6 subfamily. As to quaternary structure, monomer, homodimer and homotrimer; these structures are stabilized in the presence of S-adenosyl-L-methionine (SAM). Post-translationally, automethylated; Lys-39 and Lys-179 serve as the major automethylation sites.

The protein resides in the nucleus. The catalysed reaction is L-lysyl-[protein] + S-adenosyl-L-methionine = N(6)-methyl-L-lysyl-[protein] + S-adenosyl-L-homocysteine + H(+). The enzyme catalyses L-lysyl(8)-[histone H2AZ] + S-adenosyl-L-methionine = N(6)-methyl-L-lysyl(8)-[histone H2AZ] + S-adenosyl-L-homocysteine + H(+). With respect to regulation, activated by automethylation. Its function is as follows. Protein-lysine N-methyltransferase. Monomethylates 'Lys-310' of the RELA subunit of NF-kappa-B complex, leading to down-regulation of NF-kappa-B transcription factor activity. Monomethylates 'Lys-8' of H2AZ (H2AZK8me1). Required for the maintenance of embryonic stem cell self-renewal. Methylates PAK4. This chain is N-lysine methyltransferase SETD6, found in Homo sapiens (Human).